The following is a 127-amino-acid chain: Large ribosomal subunit protein uL22 (127 aa).

It belongs to the universal ribosomal protein uL22 family. In terms of assembly, part of the 50S ribosomal subunit.

This protein binds specifically to 23S rRNA; its binding is stimulated by other ribosomal proteins, e.g. L4, L17, and L20. It is important during the early stages of 50S assembly. It makes multiple contacts with different domains of the 23S rRNA in the assembled 50S subunit and ribosome. Functionally, the globular domain of the protein is located near the polypeptide exit tunnel on the outside of the subunit, while an extended beta-hairpin is found that lines the wall of the exit tunnel in the center of the 70S ribosome. This is Large ribosomal subunit protein uL22 from Methylobacterium sp. (strain 4-46).